Here is a 194-residue protein sequence, read N- to C-terminus: Probable GTP-binding protein EngB (194 aa).

Residues 22–194 (DLPEYALAGR…AWQFIKEGME (173 aa)) form the EngB-type G domain. GTP-binding positions include 30–37 (GRSNVGKS), 57–61 (GKTQT), 75–78 (DVPG), 142–145 (TKAD), and 174–176 (FSS). S37 and T59 together coordinate Mg(2+).

Belongs to the TRAFAC class TrmE-Era-EngA-EngB-Septin-like GTPase superfamily. EngB GTPase family. Mg(2+) is required as a cofactor.

In terms of biological role, necessary for normal cell division and for the maintenance of normal septation. This is Probable GTP-binding protein EngB from Listeria monocytogenes serovar 1/2a (strain ATCC BAA-679 / EGD-e).